A 31-amino-acid polypeptide reads, in one-letter code: Photosystem I reaction center subunit XII (31 aa).

Residues 7-26 traverse the membrane as a helical segment; the sequence is QVFLALIIALIPGILADRLG.

The protein belongs to the PsaM family.

The protein localises to the plastid. It localises to the chloroplast thylakoid membrane. This chain is Photosystem I reaction center subunit XII, found in Euglena deses.